Here is a 116-residue protein sequence, read N- to C-terminus: Large ribosomal subunit protein bL19 (116 aa).

This sequence belongs to the bacterial ribosomal protein bL19 family.

Its function is as follows. This protein is located at the 30S-50S ribosomal subunit interface and may play a role in the structure and function of the aminoacyl-tRNA binding site. The polypeptide is Large ribosomal subunit protein bL19 (Pseudomonas aeruginosa (strain LESB58)).